The sequence spans 524 residues: Probable aminopeptidase NPEPL1 (524 aa).

Zn(2+) is bound by residues lysine 260 and aspartate 265. Lysine 272 is a catalytic residue. Zn(2+)-binding residues include aspartate 283, aspartate 342, and glutamate 344. The active site involves arginine 346.

Belongs to the peptidase M17 family. Zn(2+) serves as cofactor. Mn(2+) is required as a cofactor.

Its function is as follows. Probably catalyzes the removal of unsubstituted N-terminal amino acids from various peptides. In Mus musculus (Mouse), this protein is Probable aminopeptidase NPEPL1 (Npepl1).